The chain runs to 146 residues: Hemoglobin subunit beta (146 aa).

The residue at position 1 (valine 1) is an N-acetylvaline. The 145-residue stretch at 2-146 (HLTADEKAAV…VATALAHKYH (145 aa)) folds into the Globin domain. Residue serine 44 is modified to Phosphoserine. Lysine 59 carries the N6-acetyllysine modification. Histidine 63 is a heme b binding site. An N6-acetyllysine modification is found at lysine 82. Histidine 92 lines the heme b pocket. Cysteine 93 carries the S-nitrosocysteine modification. An N6-acetyllysine modification is found at lysine 144.

This sequence belongs to the globin family. Heterotetramer of two alpha chains and two beta chains. In terms of tissue distribution, red blood cells.

Involved in oxygen transport from the lung to the various peripheral tissues. This chain is Hemoglobin subunit beta (HBB), found in Myotis velifer (Mouse-eared bat).